The chain runs to 76 residues: Translation initiation factor IF-1 (76 aa).

The S1-like domain occupies 1–72 (MAKKDVVVMQ…NKGRIVKREK (72 aa)).

This sequence belongs to the IF-1 family. Component of the 30S ribosomal translation pre-initiation complex which assembles on the 30S ribosome in the order IF-2 and IF-3, IF-1 and N-formylmethionyl-tRNA(fMet); mRNA recruitment can occur at any time during PIC assembly.

Its subcellular location is the cytoplasm. In terms of biological role, one of the essential components for the initiation of protein synthesis. Stabilizes the binding of IF-2 and IF-3 on the 30S subunit to which N-formylmethionyl-tRNA(fMet) subsequently binds. Helps modulate mRNA selection, yielding the 30S pre-initiation complex (PIC). Upon addition of the 50S ribosomal subunit IF-1, IF-2 and IF-3 are released leaving the mature 70S translation initiation complex. In Petrotoga mobilis (strain DSM 10674 / SJ95), this protein is Translation initiation factor IF-1.